Reading from the N-terminus, the 247-residue chain is ATP synthase subunit a, chloroplastic (247 aa).

Helical transmembrane passes span 38–58 (QVLITSWVVIAILLGSATIAV), 95–115 (VPFIGTMFLFIFVSNWSGALL), 134–154 (INTTVALALLTSVAYFYAGLT), 199–219 (LVVVVLVSLVPSVVPIPVMFL), and 220–240 (GLFTSGIQALIFATLAAAYIG).

It belongs to the ATPase A chain family. As to quaternary structure, F-type ATPases have 2 components, CF(1) - the catalytic core - and CF(0) - the membrane proton channel. CF(1) has five subunits: alpha(3), beta(3), gamma(1), delta(1), epsilon(1). CF(0) has four main subunits: a, b, b' and c.

It localises to the plastid. The protein resides in the chloroplast thylakoid membrane. Key component of the proton channel; it plays a direct role in the translocation of protons across the membrane. The sequence is that of ATP synthase subunit a, chloroplastic from Buxus microphylla (Littleleaf boxwood).